A 25-amino-acid polypeptide reads, in one-letter code: Ocellatin-L2 (25 aa).

L25 carries the leucine amide modification.

Belongs to the frog skin active peptide (FSAP) family. Ocellatin subfamily. In terms of tissue distribution, expressed by the skin glands.

The protein resides in the secreted. Its function is as follows. Shows a low activity in stimulating insulin release from rat BRIN-BD11 beta cells, and acts without loss of integrity of the plasma membrane. Does not show antibacterial (E.coli and S.aureus). Does not show hemolytic activity against human erythrocytes. This chain is Ocellatin-L2, found in Leptodactylus laticeps (Santa Fe frog).